The primary structure comprises 298 residues: 2-dehydropantoate 2-reductase (298 aa).

NADP(+) contacts are provided by residues 7-12, asparagine 98, and alanine 124; that span reads GGGSVG. Asparagine 98 is a substrate binding site. Lysine 179 functions as the Proton donor in the catalytic mechanism. Substrate contacts are provided by asparagine 183, asparagine 187, asparagine 197, and serine 246. Residue glutamate 258 coordinates NADP(+).

It belongs to the ketopantoate reductase family.

It is found in the cytoplasm. The enzyme catalyses (R)-pantoate + NADP(+) = 2-dehydropantoate + NADPH + H(+). It functions in the pathway cofactor biosynthesis; (R)-pantothenate biosynthesis; (R)-pantoate from 3-methyl-2-oxobutanoate: step 2/2. Its function is as follows. Catalyzes the NADPH-dependent reduction of ketopantoate into pantoic acid. The sequence is that of 2-dehydropantoate 2-reductase (panE) from Bacillus subtilis (strain 168).